A 456-amino-acid chain; its full sequence is Sulfate adenylyltransferase (456 aa).

The protein belongs to the sulfate adenylyltransferase family.

The catalysed reaction is sulfate + ATP + H(+) = adenosine 5'-phosphosulfate + diphosphate. The protein operates within sulfur metabolism; hydrogen sulfide biosynthesis; sulfite from sulfate: step 1/3. The protein is Sulfate adenylyltransferase (sat) of Archaeoglobus fulgidus (strain ATCC 49558 / DSM 4304 / JCM 9628 / NBRC 100126 / VC-16).